Consider the following 131-residue polypeptide: ATP synthase epsilon chain (131 aa).

This sequence belongs to the ATPase epsilon chain family. As to quaternary structure, F-type ATPases have 2 components, CF(1) - the catalytic core - and CF(0) - the membrane proton channel. CF(1) has five subunits: alpha(3), beta(3), gamma(1), delta(1), epsilon(1). CF(0) has three main subunits: a, b and c.

It localises to the cell membrane. In terms of biological role, produces ATP from ADP in the presence of a proton gradient across the membrane. This is ATP synthase epsilon chain from Clostridium novyi (strain NT).